The primary structure comprises 589 residues: Aspartate--tRNA(Asp/Asn) ligase (589 aa).

Residue Glu172 participates in L-aspartate binding. An aspartate region spans residues Gln196–Lys199. An L-aspartate-binding site is contributed by Arg218. ATP contacts are provided by residues Arg218–Glu220 and Gln227. An L-aspartate-binding site is contributed by His449. Glu483 is an ATP binding site. Position 490 (Arg490) interacts with L-aspartate. Residue Gly535–Arg538 coordinates ATP.

The protein belongs to the class-II aminoacyl-tRNA synthetase family. Type 1 subfamily. As to quaternary structure, homodimer.

The protein localises to the cytoplasm. It carries out the reaction tRNA(Asx) + L-aspartate + ATP = L-aspartyl-tRNA(Asx) + AMP + diphosphate. Functionally, aspartyl-tRNA synthetase with relaxed tRNA specificity since it is able to aspartylate not only its cognate tRNA(Asp) but also tRNA(Asn). Reaction proceeds in two steps: L-aspartate is first activated by ATP to form Asp-AMP and then transferred to the acceptor end of tRNA(Asp/Asn). The sequence is that of Aspartate--tRNA(Asp/Asn) ligase from Francisella philomiragia subsp. philomiragia (strain ATCC 25017 / CCUG 19701 / FSC 153 / O#319-036).